Reading from the N-terminus, the 636-residue chain is Protein meg-1 (636 aa).

Polar residues-rich tracts occupy residues 1–13 (MDNR…NGNF), 38–54 (SSGN…NQQQ), and 292–355 (LSMN…QYNH). Disordered stretches follow at residues 1–54 (MDNR…NQQQ), 289–367 (LFNL…APHL), 484–504 (SDVA…SMYI), and 521–542 (LDSS…KTPS). Ser-574 is modified (phosphoserine; by mbk-2). The interval 591 to 636 (MSQSFLHQQDDEAPDCTKNVHSESDLKQAEPQESDKQSDKELPSNE) is disordered. The segment covering 608 to 636 (KNVHSESDLKQAEPQESDKQSDKELPSNE) has biased composition (basic and acidic residues).

In terms of assembly, interacts with pptr-1, pptr-2 and pgl-1. In terms of processing, phosphorylated by mbk-2, which promotes the disassembly of zygotic P granules in the anterior cytoplasm of pre-gastrulation embryos. Dephosphorylated by a phosphatase complex containing the PP2A regulatory subunit pptr-1, which promotes the assembly and accumulation of zygotic P granules in the posterior cytoplasm of pre-gastrulation embryos. Not expressed in the adult germline or in any somatic tissues.

Its subcellular location is the cytoplasmic granule. In terms of biological role, p granule component, which acts redundantly with P granule component meg-2 to promote P granule segregation during embryogenesis, and germ cell proliferation and differentiation in larval stages. In its phosphorylated form, and together with meg-2, promotes the disassembly of zygotic P granules in the anterior cytoplasm of pre-gastrulation embryos. In its dephosphorylated form, and together with meg-2, promotes the assembly and accumulation of zygotic P granules in the posterior cytoplasm of pre-gastrulation embryos. May function with the nanos family members nos-2 and nos-3 to promote germ cell proliferation during larval development. Required for fertility. This is Protein meg-1 from Caenorhabditis elegans.